A 142-amino-acid chain; its full sequence is MKTISAKPETVKRDWYVIDATDKTLGRLSTEIARRLRGKHKAEYTPHVDTGDYIVVVNAEKVRVTGNKAQDKMYYRHTGYPGGLKEMSFDKLIQHAPERVIETAVKGMMPRNPLGRAMLKKLKVYASAEHPHTAQQPIELKI.

The protein belongs to the universal ribosomal protein uL13 family. As to quaternary structure, part of the 50S ribosomal subunit.

This protein is one of the early assembly proteins of the 50S ribosomal subunit, although it is not seen to bind rRNA by itself. It is important during the early stages of 50S assembly. This chain is Large ribosomal subunit protein uL13, found in Hahella chejuensis (strain KCTC 2396).